The primary structure comprises 653 residues: Acetyl-coenzyme A synthetase (653 aa).

Residues 195–198 (RGGK) and T314 each bind CoA. ATP is bound by residues 390 to 392 (GEP), 414 to 419 (DTWWQT), D505, and R520. S528 contributes to the CoA binding site. R531 is an ATP binding site. Positions 542 and 547 each coordinate Mg(2+). Residue K617 is modified to N6-acetyllysine.

Belongs to the ATP-dependent AMP-binding enzyme family. The cofactor is Mg(2+). Acetylated. Deacetylation by the SIR2-homolog deacetylase activates the enzyme.

The catalysed reaction is acetate + ATP + CoA = acetyl-CoA + AMP + diphosphate. Its function is as follows. Catalyzes the conversion of acetate into acetyl-CoA (AcCoA), an essential intermediate at the junction of anabolic and catabolic pathways. AcsA undergoes a two-step reaction. In the first half reaction, AcsA combines acetate with ATP to form acetyl-adenylate (AcAMP) intermediate. In the second half reaction, it can then transfer the acetyl group from AcAMP to the sulfhydryl group of CoA, forming the product AcCoA. The sequence is that of Acetyl-coenzyme A synthetase from Pasteurella multocida (strain Pm70).